Here is a 99-residue protein sequence, read N- to C-terminus: PE-PGRS family protein PE25 (99 aa).

Residues 1-92 form the PE domain; the sequence is MSFVITNPEA…GADKYATAEA (92 aa). Position 2 is an N-acetylserine (serine 2).

The protein belongs to the mycobacterial PE family. In terms of assembly, forms a heterodimer with PPE41. The dimer forms a 1:1:1 heterotrimeric complex with EspG5. Interacts with PPE51.

Its subcellular location is the secreted. The PE25/PPE41 dimer induces both a strong humoral and cellular immune response. PE25 protein alone induces low response. The dimer induces necrosis, but not apoptosis, in mouse macrophage cells. It also induces activation and maturation of mouse dendritic cells and drives Th2-biased immune responses. The sequence is that of PE-PGRS family protein PE25 from Mycobacterium tuberculosis (strain ATCC 25618 / H37Rv).